Here is a 538-residue protein sequence, read N- to C-terminus: Sterile alpha motif domain-containing protein 1 (538 aa).

Residues 1 to 11 are compositionally biased toward pro residues; that stretch reads MAGPPALPPPE. Disordered stretches follow at residues 1–30 and 92–247; these read MAGP…ASPH and SYRN…GAAR. Low complexity predominate over residues 12 to 29; that stretch reads TAAAATTAAAASSSAASP. An SAMD1-like winged helix (WH) domain is found at 23-99; sequence SSSAASPHYQ…SISYRNAARV (77 aa). Thr107 is modified (phosphothreonine). The span at 115 to 125 shows a compositional bias: low complexity; sequence PRGAPAAAAAA. The segment covering 126 to 139 has biased composition (pro residues); it reads APPPTPAPPPPPAP. The segment covering 140 to 158 has biased composition (low complexity); that stretch reads VAAAAPARAPRAAAAAATA. Ser161 carries the post-translational modification Phosphoserine. Low complexity predominate over residues 168-177; sequence GPRAQRAAPL. The segment covering 178–236 has biased composition (pro residues); sequence AAPPPAPAAPPAVAPPAGPRRAPPPAVAAREPPLPPPPQPPAPPQQQQPPPPQPQPPPE. The span at 237–247 shows a compositional bias: low complexity; that stretch reads GGAVRAGGAAR. The residue at position 261 (Ser261) is a Phosphoserine. Residues 282–291 are compositionally biased toward basic and acidic residues; that stretch reads AARGRLERTR. A disordered region spans residues 282–458; that stretch reads AARGRLERTR…PPGRKEKPSD (177 aa). Over residues 328–351 the composition is skewed to acidic residues; that stretch reads KEEEEDDDEDEDEEDDVSEGSEVP. Positions 425-436 are enriched in pro residues; sequence SPSPVPLPPGKP. In terms of domain architecture, SAM spans 462 to 530; the sequence is WTVMDVVEYF…KVLQQGHFED (69 aa).

In terms of assembly, homopolymerize into a closed pentameric ring. Interacts (via SAM domain) with L3MBTL3 (via SAM domain); the interaction mediates L3MBTL3 binding to chromatin. Interacts (via WH domain) with KDM1A; the interaction modulates KDM1A function. In terms of tissue distribution, expressed in atherosclerotic lesions, not in normal intima. Expressed in foam cells.

It localises to the nucleus. It is found in the chromosome. The protein localises to the secreted. In terms of biological role, unmethylated CpG islands (CGIs)-binding protein which localizes to H3K4me3-decorated CGIs, where it acts as a transcriptional repressor. Tethers L3MBTL3 to chromatin and interacts with the KDM1A histone demethylase complex to modulate H3K4me2 and H3K4me3 levels at CGIs. Plays a role in atherogenesis by binding with LDL on cell surface and promoting LDL oxidation which leads to the formation of foam cell. In Homo sapiens (Human), this protein is Sterile alpha motif domain-containing protein 1.